A 362-amino-acid chain; its full sequence is Epoxyqueuosine reductase (362 aa).

The active-site Proton donor is Asp143. Residues 191 to 220 (PDSPKHQDSCGKCQACIKLCPTGAIQPGKM) form the 4Fe-4S ferredoxin-type domain. Cys200, Cys203, Cys206, Cys210, Cys226, Cys253, Cys256, and Cys260 together coordinate [4Fe-4S] cluster.

Belongs to the QueG family. As to quaternary structure, monomer. Requires cob(II)alamin as cofactor. [4Fe-4S] cluster is required as a cofactor.

Its subcellular location is the cytoplasm. It carries out the reaction epoxyqueuosine(34) in tRNA + AH2 = queuosine(34) in tRNA + A + H2O. The protein operates within tRNA modification; tRNA-queuosine biosynthesis. Its function is as follows. Catalyzes the conversion of epoxyqueuosine (oQ) to queuosine (Q), which is a hypermodified base found in the wobble positions of tRNA(Asp), tRNA(Asn), tRNA(His) and tRNA(Tyr). The protein is Epoxyqueuosine reductase of Francisella cf. novicida (strain Fx1).